Here is a 193-residue protein sequence, read N- to C-terminus: Interferon lambda-2 (193 aa).

The N-terminal stretch at 1–19 (MLLLLLPLLLAAVLTRTQA) is a signal peptide. A glycan (N-linked (GlcNAc...) asparagine) is linked at N105.

It belongs to the lambda interferon family.

The protein resides in the secreted. Cytokine with antiviral, antitumour and immunomodulatory activities. Plays a critical role in the antiviral host defense, predominantly in the epithelial tissues. Acts as a ligand for the heterodimeric class II cytokine receptor composed of IL10RB and IFNLR1, and receptor engagement leads to the activation of the JAK/STAT signaling pathway resulting in the expression of IFN-stimulated genes (ISG), which mediate the antiviral state. Has a restricted receptor distribution and therefore restricted targets: is primarily active in epithelial cells and this cell type-selective action is because of the epithelial cell-specific expression of its receptor IFNLR1. Seems not to be essential for early virus-activated host defense in vaginal infection, but plays an important role in Toll-like receptor (TLR)-induced antiviral defense. Plays a significant role in the antiviral immune defense in the intestinal epithelium. Exerts an immunomodulatory effect by up-regulating MHC class I antigen expression. The sequence is that of Interferon lambda-2 (Ifnl2) from Mus musculus (Mouse).